We begin with the raw amino-acid sequence, 122 residues long: Large ribosomal subunit protein uL14 (122 aa).

The protein belongs to the universal ribosomal protein uL14 family. As to quaternary structure, part of the 50S ribosomal subunit. Forms a cluster with proteins L3 and L19. In the 70S ribosome, L14 and L19 interact and together make contacts with the 16S rRNA in bridges B5 and B8.

Functionally, binds to 23S rRNA. Forms part of two intersubunit bridges in the 70S ribosome. The sequence is that of Large ribosomal subunit protein uL14 from Pseudomonas entomophila (strain L48).